The following is a 371-amino-acid chain: Alanine dehydrogenase (371 aa).

2 residues coordinate substrate: Arg-15 and Lys-75. Residue His-96 is the Proton donor/acceptor of the active site. NAD(+) contacts are provided by residues Ser-134, Asp-198, Arg-203, Ser-220, 239-240 (VL), 267-270 (VAID), Lys-279, and 298-301 (VANM). Asp-270 functions as the Proton donor/acceptor in the catalytic mechanism.

It belongs to the AlaDH/PNT family. Mg(2+) serves as cofactor.

The enzyme catalyses L-alanine + NAD(+) + H2O = pyruvate + NH4(+) + NADH + H(+). It functions in the pathway amino-acid degradation; L-alanine degradation via dehydrogenase pathway; NH(3) and pyruvate from L-alanine: step 1/1. Catalyzes the reversible reductive amination of pyruvate to L-alanine. The sequence is that of Alanine dehydrogenase from Halomonas elongata (strain ATCC 33173 / DSM 2581 / NBRC 15536 / NCIMB 2198 / 1H9).